The primary structure comprises 398 residues: MSFDRNQDGKLKVKTSSKLPVSPTFESMKLQENLLRGIYGYGFEAPSAIQSRAITQIIRGKDVIAQAQSGTGKTATFTIGMLQVIDSSSKDLQALVLSPTRELAAQISQVVRNLGDYMNVVALACTGGKALQQDISKVNKGCHVMSGTPGRVLDMIKRRIINTRHVKMLVLDEADELLSETLGFKQQLYDIFTKLPSSVQVVVVSATMSKDVLEVTKKFMSDPVKILVKRDEVSLEGIKQYHINVDKEEWKFDTLCDLYDSLTITQCVIFCNTKKKVDWLSHKLIQNNFAVASIHGDMKQDDRDKVMSDFRSGSSRVLISTDVWARGIDVQQVSLVINYDLPELLENYIHRIGRSGRFGRKGVAINFITREEVTKLKSIEKHYSIKIKPMPADIDSLS.

Positions 23 to 51 match the Q motif motif; that stretch reads PTFESMKLQENLLRGIYGYGFEAPSAIQS. Residues 54 to 226 enclose the Helicase ATP-binding domain; sequence ITQIIRGKDV…KKFMSDPVKI (173 aa). 67 to 74 provides a ligand contact to ATP; sequence AQSGTGKT. Residues 172–175 carry the DEAD box motif; it reads DEAD. Residues 237–398 form the Helicase C-terminal domain; that stretch reads GIKQYHINVD…PMPADIDSLS (162 aa).

This sequence belongs to the DEAD box helicase family. DDX48/FAL1 subfamily.

Its subcellular location is the nucleus. The protein resides in the nucleolus. It catalyses the reaction ATP + H2O = ADP + phosphate + H(+). Its function is as follows. ATP-dependent RNA helicase involved in 40S ribosomal subunit biogenesis. Required for the processing and cleavage of 35S pre-rRNA at sites A0, A1, and A2, leading to mature 18S rRNA. The protein is ATP-dependent RNA helicase FAL1 (FAL1) of Eremothecium gossypii (strain ATCC 10895 / CBS 109.51 / FGSC 9923 / NRRL Y-1056) (Yeast).